A 176-amino-acid polypeptide reads, in one-letter code: MAAAGRGREQDSARFVYVTRFGSHQCSGVLQLGGRGAQGLWGQGPGAGCRQEKPREAMAVAGVQGGSELPLGSQLRVPTTPGVEAAASASSQLRASRVQSGTRQSARAGLIQKDAAKKYDFPIPLNEASKIMKKKKKVLVWNRVYKVISRMLEENEKYRHRLKCQRLSSESSNYTR.

A compositionally biased stretch (low complexity) spans 87 to 100 (ASASSQLRASRVQS). Residues 87-109 (ASASSQLRASRVQSGTRQSARAG) are disordered.

This is an uncharacterized protein from Homo sapiens (Human).